The sequence spans 201 residues: Large ribosomal subunit protein uL4 (201 aa).

The interval alanine 45–glycine 71 is disordered.

The protein belongs to the universal ribosomal protein uL4 family. As to quaternary structure, part of the 50S ribosomal subunit.

Its function is as follows. One of the primary rRNA binding proteins, this protein initially binds near the 5'-end of the 23S rRNA. It is important during the early stages of 50S assembly. It makes multiple contacts with different domains of the 23S rRNA in the assembled 50S subunit and ribosome. Forms part of the polypeptide exit tunnel. The chain is Large ribosomal subunit protein uL4 from Shewanella pealeana (strain ATCC 700345 / ANG-SQ1).